A 553-amino-acid polypeptide reads, in one-letter code: Flagellar hook-associated protein 1 (553 aa).

The protein belongs to the flagella basal body rod proteins family.

The protein resides in the secreted. Its subcellular location is the bacterial flagellum. The chain is Flagellar hook-associated protein 1 (flgK) from Salmonella typhi.